A 272-amino-acid polypeptide reads, in one-letter code: 2-C-methyl-D-erythritol 4-phosphate cytidylyltransferase (272 aa).

Belongs to the IspD/TarI cytidylyltransferase family. IspD subfamily.

The catalysed reaction is 2-C-methyl-D-erythritol 4-phosphate + CTP + H(+) = 4-CDP-2-C-methyl-D-erythritol + diphosphate. It functions in the pathway isoprenoid biosynthesis; isopentenyl diphosphate biosynthesis via DXP pathway; isopentenyl diphosphate from 1-deoxy-D-xylulose 5-phosphate: step 2/6. Its function is as follows. Catalyzes the formation of 4-diphosphocytidyl-2-C-methyl-D-erythritol from CTP and 2-C-methyl-D-erythritol 4-phosphate (MEP). This is 2-C-methyl-D-erythritol 4-phosphate cytidylyltransferase from Xanthomonas oryzae pv. oryzae (strain PXO99A).